A 340-amino-acid chain; its full sequence is Ketol-acid reductoisomerase (NADP(+)) (340 aa).

In terms of domain architecture, KARI N-terminal Rossmann spans 1-182 (MRVYYDRDCD…GGGRSGIIET (182 aa)). Residues 24-27 (YGSQ), Arg-48, Ser-51, Ser-53, and 83-86 (DELQ) contribute to the NADP(+) site. Residue His-108 is part of the active site. An NADP(+)-binding site is contributed by Gly-134. One can recognise a KARI C-terminal knotted domain in the interval 183–329 (NFREECETDL…KELRGMMPWI (147 aa)). Residues Asp-191, Glu-195, Glu-227, and Glu-231 each contribute to the Mg(2+) site. Ser-252 contacts substrate.

Belongs to the ketol-acid reductoisomerase family. The cofactor is Mg(2+).

It carries out the reaction (2R)-2,3-dihydroxy-3-methylbutanoate + NADP(+) = (2S)-2-acetolactate + NADPH + H(+). It catalyses the reaction (2R,3R)-2,3-dihydroxy-3-methylpentanoate + NADP(+) = (S)-2-ethyl-2-hydroxy-3-oxobutanoate + NADPH + H(+). Its pathway is amino-acid biosynthesis; L-isoleucine biosynthesis; L-isoleucine from 2-oxobutanoate: step 2/4. The protein operates within amino-acid biosynthesis; L-valine biosynthesis; L-valine from pyruvate: step 2/4. In terms of biological role, involved in the biosynthesis of branched-chain amino acids (BCAA). Catalyzes an alkyl-migration followed by a ketol-acid reduction of (S)-2-acetolactate (S2AL) to yield (R)-2,3-dihydroxy-isovalerate. In the isomerase reaction, S2AL is rearranged via a Mg-dependent methyl migration to produce 3-hydroxy-3-methyl-2-ketobutyrate (HMKB). In the reductase reaction, this 2-ketoacid undergoes a metal-dependent reduction by NADPH to yield (R)-2,3-dihydroxy-isovalerate. This chain is Ketol-acid reductoisomerase (NADP(+)), found in Dinoroseobacter shibae (strain DSM 16493 / NCIMB 14021 / DFL 12).